A 227-amino-acid chain; its full sequence is tRNA (guanine-N(1)-)-methyltransferase (227 aa).

Residues Gly110 and Ile129 to Leu134 contribute to the S-adenosyl-L-methionine site.

The protein belongs to the RNA methyltransferase TrmD family. In terms of assembly, homodimer.

The protein resides in the cytoplasm. It catalyses the reaction guanosine(37) in tRNA + S-adenosyl-L-methionine = N(1)-methylguanosine(37) in tRNA + S-adenosyl-L-homocysteine + H(+). Specifically methylates guanosine-37 in various tRNAs. In Mycoplasmopsis agalactiae (strain NCTC 10123 / CIP 59.7 / PG2) (Mycoplasma agalactiae), this protein is tRNA (guanine-N(1)-)-methyltransferase.